A 503-amino-acid chain; its full sequence is NAD(P)H-quinone oxidoreductase chain 4, chloroplastic (503 aa).

13 consecutive transmembrane segments (helical) span residues 4-24 (FPWL…IFFL), 37-57 (ICIC…HFQL), 87-107 (IGPT…AWPV), 134-154 (LLLF…LLSM), 167-187 (FILY…GMGL), 208-228 (ALEI…SPII), 242-262 (HYST…YGLV), 272-292 (AHSI…IYAA), 305-325 (IAYS…SITD), 330-350 (GAIL…FLAG), 386-406 (LALP…GIIT), 416-436 (ILIT…SLSM), and 462-482 (LFVS…PDFV).

Belongs to the complex I subunit 4 family.

The protein resides in the plastid. It is found in the chloroplast thylakoid membrane. It carries out the reaction a plastoquinone + NADH + (n+1) H(+)(in) = a plastoquinol + NAD(+) + n H(+)(out). The enzyme catalyses a plastoquinone + NADPH + (n+1) H(+)(in) = a plastoquinol + NADP(+) + n H(+)(out). This is NAD(P)H-quinone oxidoreductase chain 4, chloroplastic from Drimys granadensis.